The sequence spans 201 residues: Recombination protein RecR (201 aa).

Residues 57 to 72 (CRDCRTFTEQEVCTIC) form a C4-type zinc finger. Positions 81–176 (GQICVVESPA…LASRIAHGVP (96 aa)) constitute a Toprim domain.

It belongs to the RecR family.

Its function is as follows. May play a role in DNA repair. It seems to be involved in an RecBC-independent recombinational process of DNA repair. It may act with RecF and RecO. The protein is Recombination protein RecR of Edwardsiella ictaluri (strain 93-146).